The following is a 561-amino-acid chain: Endoplasmic reticulum oxidoreductin-1 (561 aa).

Residues 1–18 form the signal peptide; the sequence is MVKVLQLCFLSAISLVQA. N20 and N39 each carry an N-linked (GlcNAc...) asparagine glycan. Disulfide bonds link C95–C349, C105–C110, C145–C166, C152–C295, and C352–C355. Residue N135 is glycosylated (N-linked (GlcNAc...) asparagine). FAD is bound by residues R187, T189, W200, S228, H231, and R260. A glycan (N-linked (GlcNAc...) asparagine) is linked at N342. C352 acts as the Nucleophile in catalysis. C355 is a catalytic residue. N452 carries an N-linked (GlcNAc...) asparagine glycan.

This sequence belongs to the EROs family. As to quaternary structure, may function both as a monomer and a homodimer. FAD serves as cofactor.

The protein resides in the endoplasmic reticulum membrane. Essential oxidoreductase that oxidizes proteins in the endoplasmic reticulum to produce disulfide bonds. Acts by oxidizing directly PDI1 isomerase through a direct disulfide exchange. Does not act as a direct oxidant of folding substrate, but relies on PDI1 to transfer oxidizing equivalent. Does not oxidize all pdi related proteins, suggesting that it can discriminate between PDI1 and related proteins. Its reoxidation probably involves electron transfer to molecular oxygen via FAD. Acts independently of glutathione. May be responsible for a significant proportion of reactive oxygen species (ROS) in the cell, thereby being a source of oxidative stress. This Kluyveromyces lactis (strain ATCC 8585 / CBS 2359 / DSM 70799 / NBRC 1267 / NRRL Y-1140 / WM37) (Yeast) protein is Endoplasmic reticulum oxidoreductin-1 (ERO1).